Here is a 536-residue protein sequence, read N- to C-terminus: C-22 sterol desaturase ERG5A (536 aa).

Residues 41–61 (VWTWVFTLVALCIAYDQIAYI) traverse the membrane as a helical segment. C481 lines the heme pocket.

The protein belongs to the cytochrome P450 family. The cofactor is heme.

The protein localises to the endoplasmic reticulum membrane. The catalysed reaction is 5-dehydroepisterol + NADPH + O2 + H(+) = ergosta-5,7,22,24(28)-tetraen-3beta-ol + NADP(+) + 2 H2O. The protein operates within steroid metabolism; ergosterol biosynthesis. C-22 sterol desaturase; part of the third module of ergosterol biosynthesis pathway that includes the late steps of the pathway. ERG5A and ERG5B convert 5-dehydroepisterol into ergosta-5,7,22,24(28)-tetraen-3beta-ol by forming the C-22(23) double bond in the sterol side chain. The third module or late pathway involves the ergosterol synthesis itself through consecutive reactions that mainly occur in the endoplasmic reticulum (ER) membrane. Firstly, the squalene synthase ERG9 catalyzes the condensation of 2 farnesyl pyrophosphate moieties to form squalene, which is the precursor of all steroids. Squalene synthase is crucial for balancing the incorporation of farnesyl diphosphate (FPP) into sterol and nonsterol isoprene synthesis. Secondly, squalene is converted into lanosterol by the consecutive action of the squalene epoxidase ERG1 and the lanosterol synthase ERG7. Then, the delta(24)-sterol C-methyltransferase ERG6 methylates lanosterol at C-24 to produce eburicol. Eburicol is the substrate of the sterol 14-alpha demethylase encoded by CYP51A, CYP51B and CYP51C, to yield 4,4,24-trimethyl ergosta-8,14,24(28)-trienol. CYP51B encodes the enzyme primarily responsible for sterol 14-alpha-demethylation, and plays an essential role in ascospore formation. CYP51A encodes an additional sterol 14-alpha-demethylase, induced on ergosterol depletion and responsible for the intrinsic variation in azole sensitivity. The third CYP51 isoform, CYP51C, does not encode a sterol 14-alpha-demethylase, but is required for full virulence on host wheat ears. The C-14 reductase ERG24 then reduces the C14=C15 double bond which leads to 4,4-dimethylfecosterol. A sequence of further demethylations at C-4, involving the C-4 demethylation complex containing the C-4 methylsterol oxidases ERG25, the sterol-4-alpha-carboxylate 3-dehydrogenase ERG26 and the 3-keto-steroid reductase ERG27, leads to the production of fecosterol via 4-methylfecosterol. ERG28 has a role as a scaffold to help anchor ERG25, ERG26 and ERG27 to the endoplasmic reticulum. The C-8 sterol isomerase ERG2 then catalyzes the reaction which results in unsaturation at C-7 in the B ring of sterols and thus converts fecosterol to episterol. The sterol-C5-desaturases ERG3A and ERG3BB then catalyze the introduction of a C-5 double bond in the B ring to produce 5-dehydroepisterol. The C-22 sterol desaturases ERG5A and ERG5B further convert 5-dehydroepisterol into ergosta-5,7,22,24(28)-tetraen-3beta-ol by forming the C-22(23) double bond in the sterol side chain. Finally, ergosta-5,7,22,24(28)-tetraen-3beta-ol is substrate of the C-24(28) sterol reductase ERG4 to produce ergosterol. The protein is C-22 sterol desaturase ERG5A of Gibberella zeae (strain ATCC MYA-4620 / CBS 123657 / FGSC 9075 / NRRL 31084 / PH-1) (Wheat head blight fungus).